A 172-amino-acid chain; its full sequence is Disulfide bond formation protein B (172 aa).

Over 1-11 (MNPFRWSFRAQ) the chain is Cytoplasmic. The chain crosses the membrane as a helical span at residues 12–28 (FLLGFLACAGLLAYAIY). The Periplasmic portion of the chain corresponds to 29–46 (VQLHLGLEPCPLCIFQRI). Cys-38 and Cys-41 form a disulfide bridge. A helical transmembrane segment spans residues 47–63 (AFAALAMFFLLGALHGP). Over 64-70 (RAAAGRK) the chain is Cytoplasmic. The helical transmembrane segment at 71-88 (VYGVLSFIAAGVGMGIAA) threads the bilayer. The Periplasmic segment spans residues 89–145 (RHVWVQIRPKDMMSSCGPPLSFLSETMGPFEVFRTVLTGTGDCGNIDWRFLGLSMPM). A disulfide bridge links Cys-104 with Cys-131. Residues 146-164 (WSMVWFVGLALWALYAGFK) traverse the membrane as a helical segment. Topologically, residues 165 to 172 (ARRSSVHH) are cytoplasmic.

The protein belongs to the DsbB family.

It is found in the cell inner membrane. Functionally, required for disulfide bond formation in some periplasmic proteins. Acts by oxidizing the DsbA protein. This is Disulfide bond formation protein B from Xanthomonas euvesicatoria pv. vesicatoria (strain 85-10) (Xanthomonas campestris pv. vesicatoria).